A 294-amino-acid polypeptide reads, in one-letter code: 4-hydroxy-tetrahydrodipicolinate synthase (294 aa).

Position 44 (threonine 44) interacts with pyruvate. Tyrosine 132 serves as the catalytic Proton donor/acceptor. Lysine 161 functions as the Schiff-base intermediate with substrate in the catalytic mechanism. Isoleucine 206 lines the pyruvate pocket.

It belongs to the DapA family. In terms of assembly, homotetramer; dimer of dimers.

Its subcellular location is the cytoplasm. The catalysed reaction is L-aspartate 4-semialdehyde + pyruvate = (2S,4S)-4-hydroxy-2,3,4,5-tetrahydrodipicolinate + H2O + H(+). Its pathway is amino-acid biosynthesis; L-lysine biosynthesis via DAP pathway; (S)-tetrahydrodipicolinate from L-aspartate: step 3/4. Catalyzes the condensation of (S)-aspartate-beta-semialdehyde [(S)-ASA] and pyruvate to 4-hydroxy-tetrahydrodipicolinate (HTPA). The sequence is that of 4-hydroxy-tetrahydrodipicolinate synthase from Thermotoga sp. (strain RQ2).